The primary structure comprises 70 residues: Small ribosomal subunit protein bS21 (70 aa).

Belongs to the bacterial ribosomal protein bS21 family.

The polypeptide is Small ribosomal subunit protein bS21 (Methylobacillus flagellatus (strain ATCC 51484 / DSM 6875 / VKM B-1610 / KT)).